A 166-amino-acid chain; its full sequence is Interferon gamma (166 aa).

Positions 1–23 are cleaved as a signal peptide; that stretch reads MKYTSYFLALQLCLLLGFSGSYG. Gln24 is modified (pyrrolidone carboxylic acid). N-linked (GlcNAc...) asparagine glycosylation is found at Asn39 and Asn106.

The protein belongs to the type II (or gamma) interferon family. Homodimer. Interacts with IFNGR1 (via extracellular domain); this interaction promotes IFNGR1 dimerization. As to expression, released primarily from activated T lymphocytes.

It is found in the secreted. In terms of biological role, type II interferon produced by immune cells such as T-cells and NK cells that plays crucial roles in antimicrobial, antiviral, and antitumor responses by activating effector immune cells and enhancing antigen presentation. Primarily signals through the JAK-STAT pathway after interaction with its receptor IFNGR1 to affect gene regulation. Upon IFNG binding, IFNGR1 intracellular domain opens out to allow association of downstream signaling components JAK2, JAK1 and STAT1, leading to STAT1 activation, nuclear translocation and transcription of IFNG-regulated genes. Many of the induced genes are transcription factors such as IRF1 that are able to further drive regulation of a next wave of transcription. Plays a role in class I antigen presentation pathway by inducing a replacement of catalytic proteasome subunits with immunoproteasome subunits. In turn, increases the quantity, quality, and repertoire of peptides for class I MHC loading. Increases the efficiency of peptide generation also by inducing the expression of activator PA28 that associates with the proteasome and alters its proteolytic cleavage preference. Up-regulates as well MHC II complexes on the cell surface by promoting expression of several key molecules such as cathepsins B/CTSB, H/CTSH, and L/CTSL. Participates in the regulation of hematopoietic stem cells during development and under homeostatic conditions by affecting their development, quiescence, and differentiation. The chain is Interferon gamma (IFNG) from Moschus berezovskii (Chinese forest musk deer).